A 648-amino-acid polypeptide reads, in one-letter code: Interferon-induced GTP-binding protein Mx1 (648 aa).

The residue at position 1 (methionine 1) is an N-acetylmethionine. Residues methionine 1–serine 26 form a disordered region. The 274-residue stretch at aspartate 56 to proline 329 folds into the Dynamin-type G domain. A G1 motif region spans residues glycine 66–serine 73. Glycine 66–serine 73 provides a ligand contact to GTP. The interval valine 91–arginine 93 is G2 motif. The interval aspartate 167–glycine 170 is G3 motif. GTP is bound by residues aspartate 167–isoleucine 171 and threonine 236–aspartate 239. The G4 motif stretch occupies residues threonine 236–aspartate 239. A G5 motif region spans residues lysine 268–glycine 271. The tract at residues leucine 330–glutamate 355 is bundle signaling element (BSE). Residues glutamate 355–cysteine 522 form a middle domain region. The tract at residues glutamate 356–glutamate 618 is stalk. The tract at residues lysine 543–lysine 546 is critical for lipid-binding. Residues threonine 560–glycine 648 enclose the GED domain.

It belongs to the TRAFAC class dynamin-like GTPase superfamily. Dynamin/Fzo/YdjA family. As to quaternary structure, homooligomer. Oligomerizes into multimeric filamentous or ring-like structures by virtue of its stalk domain. Oligomerization is critical for GTPase activity, protein stability, and recognition of viral target structures. Interacts with TRPC1, TRPC3, TRPC4, TRPC5, TRPC6 and TRPC7. Interacts with HSPA5. Interacts with TUBB/TUBB5. Interacts with DDX39A and DDX39B. Post-translationally, ISGylated. In terms of tissue distribution, ubiquitously expressed.

The protein localises to the cytoplasm. It localises to the endoplasmic reticulum membrane. It is found in the perinuclear region. Its subcellular location is the nucleus. Interferon-induced dynamin-like GTPase with antiviral activity against rabies virus (RABV), vesicular stomatitis virus (VSV) and murine pneumonia virus (MPV). Isoform 1 but not isoform 2 shows antiviral activity against vesicular stomatitis virus (VSV). The polypeptide is Interferon-induced GTP-binding protein Mx1 (MX1) (Bos taurus (Bovine)).